Here is a 31-residue protein sequence, read N- to C-terminus: Cytochrome b6-f complex subunit 6 (31 aa).

Residues leucine 3–phenylalanine 23 traverse the membrane as a helical segment.

Belongs to the PetL family. In terms of assembly, the 4 large subunits of the cytochrome b6-f complex are cytochrome b6, subunit IV (17 kDa polypeptide, PetD), cytochrome f and the Rieske protein, while the 4 small subunits are PetG, PetL, PetM and PetN. The complex functions as a dimer.

It localises to the plastid. Its subcellular location is the chloroplast thylakoid membrane. Functionally, component of the cytochrome b6-f complex, which mediates electron transfer between photosystem II (PSII) and photosystem I (PSI), cyclic electron flow around PSI, and state transitions. PetL is important for photoautotrophic growth as well as for electron transfer efficiency and stability of the cytochrome b6-f complex. The polypeptide is Cytochrome b6-f complex subunit 6 (Guillardia theta (Cryptophyte)).